The following is a 433-amino-acid chain: ATP-dependent protease ATPase subunit HslU (433 aa).

Residues Val18, 60 to 65 (GVGKTE), Asp246, Glu311, and Arg383 each bind ATP.

Belongs to the ClpX chaperone family. HslU subfamily. In terms of assembly, a double ring-shaped homohexamer of HslV is capped on each side by a ring-shaped HslU homohexamer. The assembly of the HslU/HslV complex is dependent on binding of ATP.

The protein localises to the cytoplasm. In terms of biological role, ATPase subunit of a proteasome-like degradation complex; this subunit has chaperone activity. The binding of ATP and its subsequent hydrolysis by HslU are essential for unfolding of protein substrates subsequently hydrolyzed by HslV. HslU recognizes the N-terminal part of its protein substrates and unfolds these before they are guided to HslV for hydrolysis. In Rhodopseudomonas palustris (strain BisA53), this protein is ATP-dependent protease ATPase subunit HslU.